The primary structure comprises 377 residues: All-trans-retinol dehydrogenase [NAD(+)] ADH4 (377 aa).

C47 lines the Zn(2+) pocket. T49 lines the NAD(+) pocket. Zn(2+) is bound by residues H68, C98, C101, C104, C112, and C179. Residues G204–G209, D228, K233, V297–A299, T320–F322, and R372 each bind NAD(+).

This sequence belongs to the zinc-containing alcohol dehydrogenase family. Class-II subfamily. As to quaternary structure, dimer. Requires Zn(2+) as cofactor. In terms of tissue distribution, liver specific.

The protein localises to the cytoplasm. It carries out the reaction all-trans-retinol + NAD(+) = all-trans-retinal + NADH + H(+). The catalysed reaction is 9-cis-retinol + NAD(+) = 9-cis-retinal + NADH + H(+). It catalyses the reaction 20-hydroxy-(5Z,8Z,11Z,14Z)-eicosatetraenoate + NAD(+) = 20-oxo-(5Z,8Z,11Z,14Z)-eicosatetraenoate + NADH + H(+). The enzyme catalyses 20-oxo-(5Z,8Z,11Z,14Z)-eicosatetraenoate + NAD(+) + H2O = (5Z,8Z,11Z,14Z)-eicosatetraenedioate + NADH + 2 H(+). It carries out the reaction 1,4-benzoquinone + NADH + H(+) = hydroquinone + NAD(+). Its activity is regulated as follows. Oxidation of 20-HETE is inhibited by low concentrations of N-heptylformamide. Oxidation of 20-HETE is a decreased by 55-65% by either all-trans-retinol or all-trans-retinoic acid. Strongly inhibited by omega-hydroxy fatty acids. Functionally, catalyzes the NAD-dependent oxidation of either all-trans-retinol or 9-cis-retinol. Also oxidizes long chain omega-hydroxy fatty acids, such as 20-HETE, producing both the intermediate aldehyde, 20-oxoarachidonate and the end product, a dicarboxylic acid, (5Z,8Z,11Z,14Z)-eicosatetraenedioate. Also catalyzes the reduction of benzoquinones. The protein is All-trans-retinol dehydrogenase [NAD(+)] ADH4 of Mus musculus (Mouse).